The sequence spans 258 residues: Leucyl/phenylalanyl-tRNA--protein transferase (258 aa).

Residues 199–220 (GGSDGPAPDQSIGMSSSGGVSD) form a disordered region. Low complexity predominate over residues 209-220 (SIGMSSSGGVSD).

This sequence belongs to the L/F-transferase family.

It is found in the cytoplasm. It catalyses the reaction N-terminal L-lysyl-[protein] + L-leucyl-tRNA(Leu) = N-terminal L-leucyl-L-lysyl-[protein] + tRNA(Leu) + H(+). The enzyme catalyses N-terminal L-arginyl-[protein] + L-leucyl-tRNA(Leu) = N-terminal L-leucyl-L-arginyl-[protein] + tRNA(Leu) + H(+). The catalysed reaction is L-phenylalanyl-tRNA(Phe) + an N-terminal L-alpha-aminoacyl-[protein] = an N-terminal L-phenylalanyl-L-alpha-aminoacyl-[protein] + tRNA(Phe). In terms of biological role, functions in the N-end rule pathway of protein degradation where it conjugates Leu, Phe and, less efficiently, Met from aminoacyl-tRNAs to the N-termini of proteins containing an N-terminal arginine or lysine. This is Leucyl/phenylalanyl-tRNA--protein transferase from Hyphomonas neptunium (strain ATCC 15444).